The primary structure comprises 922 residues: Pertactin autotransporter (922 aa).

A signal peptide spans 1-34; the sequence is MNMSLSRIVKAAPLRRTTLAMALGALGAAPAAYA. Positions 260 to 262 match the Cell attachment site; involved in adhesion to various eukaryotic cell lines motif; the sequence is RGD. 3 consecutive repeat copies span residues 266–270, 271–275, and 276–280. The interval 266–290 is 4 X 5 AA tandem repeats of G-G-A-V-P; that stretch reads GGAVPGGAVPGGAVPGGFGPLLDGW. The stretch at 281 to 285 is one 4; approximate repeat; the sequence is GGFGP. Residues 561 to 619 are disordered; it reads SLVGAKAPPAPKPAPQPGPQPGPQPPQPPQPPQPPQPPQPPQRQPEAPAPQPPAGRELS. Residues 568 to 613 are compositionally biased toward pro residues; sequence PPAPKPAPQPGPQPGPQPPQPPQPPQPPQPPQPPQRQPEAPAPQPP. The tract at residues 575-603 is 9 X 3 AA approximate repeats of P-Q-P; that stretch reads PQPGPQPGPQPPQPPQPPQPPQPPQPPQR. Positions 654 to 922 constitute an Autotransporter domain; that stretch reads LNPDAGGAWG…TFHAGYRYSW (269 aa).

Monomer.

The protein localises to the periplasm. It is found in the secreted. It localises to the cell surface. Its subcellular location is the cell outer membrane. In terms of biological role, agglutinogen that binds to eukaryotic cells; a process mediated by the R-G-D sequence. Pertactin may have a role in bacterial adhesion, and thus play a role in virulence. May contribute to the disease state of whooping cough. This is Pertactin autotransporter (prn) from Bordetella parapertussis (strain 12822 / ATCC BAA-587 / NCTC 13253).